Reading from the N-terminus, the 377-residue chain is 3-dehydroquinate synthase (377 aa).

Residues 113-117 (GVIGD), 137-138 (TT), K150, and K159 each bind NAD(+). E192, H254, and H273 together coordinate Zn(2+).

This sequence belongs to the sugar phosphate cyclases superfamily. Dehydroquinate synthase family. Requires Co(2+) as cofactor. Zn(2+) serves as cofactor. NAD(+) is required as a cofactor.

The protein localises to the cytoplasm. It catalyses the reaction 7-phospho-2-dehydro-3-deoxy-D-arabino-heptonate = 3-dehydroquinate + phosphate. It participates in metabolic intermediate biosynthesis; chorismate biosynthesis; chorismate from D-erythrose 4-phosphate and phosphoenolpyruvate: step 2/7. Functionally, catalyzes the conversion of 3-deoxy-D-arabino-heptulosonate 7-phosphate (DAHP) to dehydroquinate (DHQ). The protein is 3-dehydroquinate synthase of Bartonella bacilliformis (strain ATCC 35685 / KC583 / Herrer 020/F12,63).